A 376-amino-acid polypeptide reads, in one-letter code: WD repeat-containing protein wdr-5.1 (376 aa).

Residues 1 to 24 are compositionally biased toward polar residues; sequence MDTSENAASAAEQQPTQQIDQLTV. A disordered region spans residues 1 to 70; sequence MDTSENAASA…TPNPNAAGAS (70 aa). Residues 25–53 are compositionally biased toward low complexity; the sequence is PNAPDGGSSAPAPSTSPNSISPSNPTGTP. 7 WD repeats span residues 85-115, 127-157, 169-199, 211-241, 254-284, 296-329, and 341-373; these read GHTK…KIWN, GHKL…KIFE, GHNN…RIWD, AHSD…RIWD, DENP…KLWD, GHEN…YIWN, and GHTQ…HIWR.

It belongs to the WD repeat WDR5/wds family. Component of the SET2 complex (also known as the SET1/COMPASS complex), which contains at least set-2, swd-2.1, cfp-1, rbbp-5, wdr-5.1, dpy-30 and ash-2. Within the complex, interacts with cfp-1, ash-2, dpy-30 and hda-1. Interacts with histone H3 both unmethylated and methylated at 'Lys-4'. Interacts with jmjd-3.1, ceh-6, sox-2, sem-4 and egl-27. Interacts with set-2. Enriched in the germline. Detected in all nuclei of the embryo. In larvae, expression is detected in the nuclei of seam cells, somatic gonad precursor cells Z1 and Z4, vulval precursor cells, distal tip cells, hypodermal cells, intestinal and muscle cells. Also detected in the neurons from the ventral nerve cord, head and tail region. Expressed in the head and tail region, intestinal cells, muscle cells, cells of the vulva, spermatheca and sheath cells in adults.

The protein resides in the nucleus. In terms of biological role, contributes to histone modification. May position the N-terminus of histone H3 for efficient trimethylation at 'Lys-4'. Required for di- and trimethylation, particularly for the trimethylation at 'Lys-4' of histone H3. Not required for demethylation of histone H3 'Lys-27'. H3 'Lys-4' methylation represents a specific tag for epigenetic transcriptional activation, germline establishment, maintenance and function. Implicated in the epigenetic inheritance of lifespan over several generations. Acts in the germline to limit the longevity of the soma, probably by regulating a lipid metabolism pathway that signals from the germline to the intestine, thereby preventing accumulation of mono-unsaturated fatty acids. Required for RNA interference with probable antagonistic role against hpl-2 function. Plays a role in vulval cell fate specification by acting in the synthetic multivulva pathway independent of set-2. Sex determining protein required in the germline to promote the spermatogenesis to oogenesis switch during the late larval stages of development. Acts with the sex determining factor tra-1, and redundantly with wdr-5.2, to regulate fog-3 expression, which in turn determines germ cell fate. Cooperates with jmjd-3.1, egl-27 and unc-3 to ensure robust transdifferentiation of the Y rectal cell to the PDA motor neuron during larval development. The protein is WD repeat-containing protein wdr-5.1 (wdr-5.1) of Caenorhabditis elegans.